Here is a 294-residue protein sequence, read N- to C-terminus: Cytidine deaminase (294 aa).

CMP/dCMP-type deaminase domains are found at residues 48–168 and 186–294; these read DEDA…FGPK and LTGD…VLLA. 89–91 serves as a coordination point for substrate; that stretch reads NME. Histidine 102 is a Zn(2+) binding site. Glutamate 104 functions as the Proton donor in the catalytic mechanism. Zn(2+) contacts are provided by cysteine 129 and cysteine 132.

It belongs to the cytidine and deoxycytidylate deaminase family. Homodimer. It depends on Zn(2+) as a cofactor.

It carries out the reaction cytidine + H2O + H(+) = uridine + NH4(+). It catalyses the reaction 2'-deoxycytidine + H2O + H(+) = 2'-deoxyuridine + NH4(+). Functionally, this enzyme scavenges exogenous and endogenous cytidine and 2'-deoxycytidine for UMP synthesis. This is Cytidine deaminase from Escherichia coli O7:K1 (strain IAI39 / ExPEC).